The following is a 489-amino-acid chain: GTPase Der (489 aa).

2 EngA-type G domains span residues Pro30 to Pro199 and Phe227 to His403. GTP is bound by residues Gly36–Ser43, Asp85–Leu89, Asn151–Asp154, Gly233–Ser240, Asp280–Ile284, and Asn345–Asp348. The 85-residue stretch at Arg404–Arg488 folds into the KH-like domain.

It belongs to the TRAFAC class TrmE-Era-EngA-EngB-Septin-like GTPase superfamily. EngA (Der) GTPase family. Associates with the 50S ribosomal subunit.

In terms of biological role, GTPase that plays an essential role in the late steps of ribosome biogenesis. This Leptospira interrogans serogroup Icterohaemorrhagiae serovar Lai (strain 56601) protein is GTPase Der.